The primary structure comprises 184 residues: Ferredoxin-thioredoxin reductase subunit A2, chloroplastic (184 aa).

The N-terminal 71 residues, 1 to 71, are a transit peptide targeting the chloroplast; sequence MTNSYALSPA…SRKNPKSTIR (71 aa).

Belongs to the ferredoxin thioredoxin reductase alpha subunit family. In terms of assembly, heterodimer of subunit A (variable subunit) and subunit B (catalytic subunit). Heterodimeric FTR forms a complex with ferredoxin and thioredoxin.

The protein resides in the plastid. The protein localises to the chloroplast. Variable subunit of the ferredoxin-thioredoxin reductase (FTR), which catalyzes the two-electron reduction of thioredoxins by the electrons provided by reduced ferredoxin. This Arabidopsis thaliana (Mouse-ear cress) protein is Ferredoxin-thioredoxin reductase subunit A2, chloroplastic.